Here is a 457-residue protein sequence, read N- to C-terminus: Multidrug resistance protein MdtK (457 aa).

Transmembrane regions (helical) follow at residues 11-31, 46-66, 93-113, 127-147, 160-180, 188-208, 243-263, 283-301, 316-336, 357-377, 387-407, and 418-438; these read LLAL…MGVV, AVAV…GLLL, WLAL…DHVI, AVGF…FQVL, GMVI…IFIY, LGGV…FLMM, LPVA…ALLV, LMFM…RVGF, YTSM…TIVF, LMLL…GSGV, IFFI…YLLG, and PAGF…LMVL.

It belongs to the multi antimicrobial extrusion (MATE) (TC 2.A.66.1) family. MdtK subfamily.

The protein localises to the cell inner membrane. In terms of biological role, multidrug efflux pump that functions probably as a Na(+)/drug antiporter. The sequence is that of Multidrug resistance protein MdtK from Yersinia pseudotuberculosis serotype O:1b (strain IP 31758).